Consider the following 436-residue polypeptide: Proteasome-activating nucleotidase (436 aa).

Positions 15–97 form a coiled coil; that stretch reads EELCRLYRSL…LKSESEQLRS (83 aa). ATP contacts are provided by residues 222-227 and H361; that span reads GTGKTL. The tract at residues 434–436 is docks into pockets in the proteasome alpha-ring to cause gate opening; the sequence is MFA.

Belongs to the AAA ATPase family. Homohexamer. The hexameric complex has a two-ring architecture resembling a top hat that caps the 20S proteasome core at one or both ends. Upon ATP-binding, the C-terminus of PAN interacts with the alpha-rings of the proteasome core by binding to the intersubunit pockets.

The protein resides in the cytoplasm. Its function is as follows. ATPase which is responsible for recognizing, binding, unfolding and translocation of substrate proteins into the archaeal 20S proteasome core particle. Is essential for opening the gate of the 20S proteasome via an interaction with its C-terminus, thereby allowing substrate entry and access to the site of proteolysis. Thus, the C-termini of the proteasomal ATPase function like a 'key in a lock' to induce gate opening and therefore regulate proteolysis. Unfolding activity requires energy from ATP hydrolysis, whereas ATP binding alone promotes ATPase-20S proteasome association which triggers gate opening, and supports translocation of unfolded substrates. The protein is Proteasome-activating nucleotidase of Methanoregula boonei (strain DSM 21154 / JCM 14090 / 6A8).